Here is a 196-residue protein sequence, read N- to C-terminus: Somatotropin (196 aa).

The first 18 residues, 1–18 (MEKVVLLLSVLSLGVVCP), serve as a signal peptide directing secretion. Gln19 is subject to Pyrrolidone carboxylic acid. A Zn(2+)-binding site is contributed by His35. A disulfide bridge connects residues Cys69 and Cys169. Zn(2+) is bound at residue Glu178. A disulfide bond links Cys186 and Cys194.

This sequence belongs to the somatotropin/prolactin family.

Its subcellular location is the secreted. In terms of biological role, growth hormone plays an important role in growth control and is involved in the regulation of several anabolic processes. Implicated as an osmoregulatory substance important for seawater adaptation. This Siganus guttatus (Orange-spotted spinefoot) protein is Somatotropin (gh).